Here is a 452-residue protein sequence, read N- to C-terminus: Digeranylgeranylglycerophospholipid reductase (452 aa).

FAD contacts are provided by residues 15–16 (FA), 35–36 (DS), and 45–50 (KPCGDA). Residue H55 participates in a 2,3-bis-O-phytanyl-sn-glycerol 1-phospholipid binding. FAD is bound by residues A122 and D288. H297 serves as a coordination point for a 2,3-bis-O-phytanyl-sn-glycerol 1-phospholipid. 300–301 (GK) contributes to the FAD binding site. An intrachain disulfide couples C310 to C335. An a 2,3-bis-O-phytanyl-sn-glycerol 1-phospholipid-binding site is contributed by Y340.

Belongs to the geranylgeranyl reductase family. In terms of assembly, monomer. FAD is required as a cofactor.

It carries out the reaction a 2,3-bis-O-phytanyl-sn-glycerol 1-phospholipid + 8 A = a 2,3-bis-O-(geranylgeranyl)-sn-glycerol 1-phospholipid + 8 AH2. It catalyses the reaction 2,3-bis-O-(phytanyl)-sn-glycerol 1-phosphate + 8 A = 2,3-bis-O-(geranylgeranyl)-sn-glycerol 1-phosphate + 8 AH2. The enzyme catalyses sn-3-O-phytanylglycerol 1-phosphate + 4 A = sn-3-O-(geranylgeranyl)glycerol 1-phosphate + 4 AH2. The catalysed reaction is phytyl diphosphate + 3 A = (2E,6E,10E)-geranylgeranyl diphosphate + 3 AH2. It functions in the pathway membrane lipid metabolism; glycerophospholipid metabolism. In terms of biological role, is involved in the reduction of 2,3-digeranylgeranylglycerophospholipids (unsaturated archaeols) into 2,3-diphytanylglycerophospholipids (saturated archaeols) in the biosynthesis of archaeal membrane lipids. Catalyzes the formation of archaetidic acid (2,3-di-O-phytanyl-sn-glyceryl phosphate) from 2,3-di-O-geranylgeranylglyceryl phosphate (DGGGP) via the hydrogenation of each double bond of the isoprenoid chains. Is not active with NADPH or NADH as an electron donor; the physiological reducing agent is unknown. Is also active on the more upstream precursors of membrane lipid biosynthesis, catalyzing the complete reduction of 3-O-geranylgeranylglyceryl phosphate (GGGP) to 3-O-phytanylglyceryl phosphate, and the partial reduction of geranylgeranyl diphosphate (GGPP) to phytyl diphosphate, thus reducing three of four GGPP double bonds and preserving the allylic double bond (at position 2). This reaction product is a reactive prenyl donor, which can be used as a substrate by archaeal prenyltransferases such as GGGP synthases. This is Digeranylgeranylglycerophospholipid reductase from Sulfolobus acidocaldarius (strain ATCC 33909 / DSM 639 / JCM 8929 / NBRC 15157 / NCIMB 11770).